Consider the following 623-residue polypeptide: Chaperone protein HtpG (623 aa).

Residues 1 to 328 (MTQEKKKFDA…SEDLPLNISR (328 aa)) form an a; substrate-binding region. A b region spans residues 329–544 (ESLQHNSILD…ESAMDIRMER (216 aa)). Positions 545–623 (FLIEQKQIAN…DIVQKAILSL (79 aa)) are c.

It belongs to the heat shock protein 90 family. Homodimer.

The protein localises to the cytoplasm. Molecular chaperone. Has ATPase activity. This Rickettsia canadensis (strain McKiel) protein is Chaperone protein HtpG.